A 138-amino-acid polypeptide reads, in one-letter code: Small ribosomal subunit protein uS9 (138 aa).

The disordered stretch occupies residues 99–138; that stretch reads DPDNRPPLKTEGYLTRDPRAKERKKYGLHKARKAPQYSKR. The span at 100 to 118 shows a compositional bias: basic and acidic residues; sequence PDNRPPLKTEGYLTRDPRA. A compositionally biased stretch (basic residues) spans 119-138; that stretch reads KERKKYGLHKARKAPQYSKR.

It belongs to the universal ribosomal protein uS9 family.

The sequence is that of Small ribosomal subunit protein uS9 from Nostoc punctiforme (strain ATCC 29133 / PCC 73102).